The following is a 498-amino-acid chain: Phosphoethanolamine N-methyltransferase 1 (498 aa).

Residues Gly68, Arg73, Asp89, Asp115, Val116, and Asn134 each contribute to the S-adenosyl-L-homocysteine site. 5 residues coordinate phosphocholine: Ser167, Ser172, Gly173, Arg177, and Tyr184. N-methylethanolamine phosphate-binding positions include 253 to 254 (QY) and Tyr262. Residue Tyr262 participates in phosphocholine binding. Residues Val271, Ser272, Gly298, Asp320, Asp346, Cys347, and Arg363 each contribute to the S-adenosyl-L-homocysteine site. The phosphocholine site is built by Tyr394, Tyr408, Arg412, Tyr414, and Lys480. Residues Tyr394, Tyr408, 412–414 (RGY), and Lys480 contribute to the N-methylethanolamine phosphate site.

This sequence belongs to the class I-like SAM-binding methyltransferase superfamily. PEAMT family.

It catalyses the reaction phosphoethanolamine + S-adenosyl-L-methionine = N-methylethanolamine phosphate + S-adenosyl-L-homocysteine + H(+). It carries out the reaction N-methylethanolamine phosphate + S-adenosyl-L-methionine = N,N-dimethylethanolamine phosphate + S-adenosyl-L-homocysteine + H(+). The enzyme catalyses N,N-dimethylethanolamine phosphate + S-adenosyl-L-methionine = phosphocholine + S-adenosyl-L-homocysteine + H(+). It participates in phospholipid metabolism; phosphatidylcholine biosynthesis; phosphocholine from phosphoethanolamine: step 1/1. Inhibited by phosphatidic acid. Functionally, involved in phosphocholine biosynthesis. Catalyzes the N-methylation of phosphoethanolamine, phosphomonomethylethanolamine and phosphodimethylethanolamine, the three methylation steps required to convert phosphoethanolamine to phosphocholine (PC). This Triticum aestivum (Wheat) protein is Phosphoethanolamine N-methyltransferase 1.